A 120-amino-acid chain; its full sequence is Ribonuclease P protein component (120 aa).

Belongs to the RnpA family. Consists of a catalytic RNA component (M1 or rnpB) and a protein subunit.

The enzyme catalyses Endonucleolytic cleavage of RNA, removing 5'-extranucleotides from tRNA precursor.. Functionally, RNaseP catalyzes the removal of the 5'-leader sequence from pre-tRNA to produce the mature 5'-terminus. It can also cleave other RNA substrates such as 4.5S RNA. The protein component plays an auxiliary but essential role in vivo by binding to the 5'-leader sequence and broadening the substrate specificity of the ribozyme. The chain is Ribonuclease P protein component from Desulfotalea psychrophila (strain LSv54 / DSM 12343).